The chain runs to 585 residues: Cytoplasmic polyadenylation element-binding protein 1 (585 aa).

The interval 1–32 is disordered; it reads MQHQLKACGDVKTSSRAQQNHRRSTAASAKRS. RRM domains follow at residues 251-356 and 373-444; these read RKVF…PWRL and RTVF…HAET. The segment at 513–533 is disordered; it reads DQTRILPRPPHHPAAHHSHQR. A compositionally biased stretch (basic residues) spans 521-532; the sequence is PPHHPAAHHSHQ.

As to quaternary structure, interacts with fbf-1.

Functionally, cytoplasmic polyadenylation element binding protein that binds to and regulates the translation of specific mRNAs. Essential for progression through meiosis. Involved in spermatogenesis. This is Cytoplasmic polyadenylation element-binding protein 1 (cpb-1) from Caenorhabditis briggsae.